The primary structure comprises 244 residues: NAD-dependent protein deacetylase (244 aa).

The Deacetylase sirtuin-type domain maps to 1–244 (MTGEQLAHWI…LSAVQRAVMP (244 aa)). NAD(+) contacts are provided by alanine 22, threonine 26, phenylalanine 33, arginine 34, glutamine 103, isoleucine 105, aspartate 106, and histidine 121. Phenylalanine 33 is a binding site for nicotinamide. The nicotinamide site is built by isoleucine 105 and aspartate 106. The active-site Proton acceptor is histidine 121. Zn(2+) is bound by residues cysteine 129, cysteine 132, cysteine 150, and cysteine 152. NAD(+)-binding residues include threonine 190, serine 191, asparagine 213, and leucine 231.

It belongs to the sirtuin family. Class U subfamily. Requires Zn(2+) as cofactor.

Its subcellular location is the cytoplasm. The enzyme catalyses N(6)-acetyl-L-lysyl-[protein] + NAD(+) + H2O = 2''-O-acetyl-ADP-D-ribose + nicotinamide + L-lysyl-[protein]. In terms of biological role, NAD-dependent protein deacetylase which modulates the activities of several enzymes which are inactive in their acetylated form. The sequence is that of NAD-dependent protein deacetylase from Cutibacterium acnes (strain DSM 16379 / KPA171202) (Propionibacterium acnes).